An 883-amino-acid polypeptide reads, in one-letter code: Phosphoenolpyruvate carboxylase (883 aa).

Active-site residues include H138 and K546.

It belongs to the PEPCase type 1 family. Mg(2+) is required as a cofactor.

The enzyme catalyses oxaloacetate + phosphate = phosphoenolpyruvate + hydrogencarbonate. Forms oxaloacetate, a four-carbon dicarboxylic acid source for the tricarboxylic acid cycle. This is Phosphoenolpyruvate carboxylase from Salmonella dublin (strain CT_02021853).